The primary structure comprises 126 residues: MEVIEGLYYSKDHEWVKVEGDKAYIGITDYAQHSLGNIVYIELPEVGAELSAGDVLGVVESVKAASDVYTPVDGKVLEVNNAIVDDPSLVNNDPYGSWMALVELKDKSQLDNLMTAEEYKKFLDEE.

The region spanning 22 to 103 (KAYIGITDYA…PYGSWMALVE (82 aa)) is the Lipoyl-binding domain. At K63 the chain carries N6-lipoyllysine.

It belongs to the GcvH family. In terms of assembly, the glycine cleavage system is composed of four proteins: P, T, L and H. Requires (R)-lipoate as cofactor.

In terms of biological role, the glycine cleavage system catalyzes the degradation of glycine. The H protein shuttles the methylamine group of glycine from the P protein to the T protein. The polypeptide is Glycine cleavage system H protein (Thermoanaerobacter pseudethanolicus (strain ATCC 33223 / 39E) (Clostridium thermohydrosulfuricum)).